The primary structure comprises 502 residues: Ubiquitin-associated protein 1 (502 aa).

Residues 1–95 (MASKKLGADF…AEAKVNSKSG (95 aa)) are interaction with ESCRT-I. In terms of domain architecture, UMA spans 17–63 (LDDVPFKTGDKFKTPAKVGLPIGFSLPDCLQVVREVQYDFSLEKKTI). Over residues 86 to 100 (AEAKVNSKSGPEGDS) the composition is skewed to basic and acidic residues. The tract at residues 86-117 (AEAKVNSKSGPEGDSKMSFSKTHSTATMPPPI) is disordered. Positions 102–112 (MSFSKTHSTAT) are enriched in polar residues. A phosphoserine mark is found at serine 146, serine 205, and serine 289. The interaction with PTPN23 stretch occupies residues 260-290 (VSNIKSLSFPKLDSDDSNQKTAKLASTFHST). 2 UBA domains span residues 389 to 430 (SPSE…LFAH) and 451 to 498 (QCSE…LMAR).

In terms of assembly, component of an ESCRT-I complex (endosomal sorting complex required for transport I) which consists of TSG101, VPS28, VPS37A and UBAP1 in a 1:1:1:1 stoichiometry. Interacts with PTPN23. Interacts (via UBA domains) with ubiquitinated proteins. Ubiquitous. Highly expressed in heart, brain, placenta, lung, liver, skeletal muscle and pancreas.

The protein localises to the cytoplasm. Its subcellular location is the cytosol. It localises to the endosome. In terms of biological role, component of the ESCRT-I complex, a regulator of vesicular trafficking process. Binds to ubiquitinated cargo proteins and is required for the sorting of endocytic ubiquitinated cargos into multivesicular bodies (MVBs). Plays a role in the proteasomal degradation of ubiquitinated cell-surface proteins, such as EGFR and BST2. The chain is Ubiquitin-associated protein 1 from Homo sapiens (Human).